Consider the following 460-residue polypeptide: Citrate synthase, peroxisomal (460 aa).

Ser-21 is modified (phosphoserine). Residues Lys-218 and Lys-239 each participate in a glycyl lysine isopeptide (Lys-Gly) (interchain with G-Cter in ubiquitin) cross-link. Catalysis depends on residues His-293 and His-339. Glycyl lysine isopeptide (Lys-Gly) (interchain with G-Cter in ubiquitin) cross-links involve residues Lys-354 and Lys-385. Asp-394 is an active-site residue. The C-terminal peroxisome targeting signal (PTS1) signature appears at 458–460 (SKL).

It belongs to the citrate synthase family. Interacts with F-box protein UCC1. In terms of processing, ubiquitinated by the E3 ubiquitin-protein ligase complex SCF(UCC1), which leads to its degradation by the proteasome. Ubiquitination is prevented by oxaloacetate, suggesting the existence of an oxaloacetate-dependent positive feedback loop that stabilizes CIT2.

The protein localises to the cytoplasm. The protein resides in the peroxisome. It carries out the reaction oxaloacetate + acetyl-CoA + H2O = citrate + CoA + H(+). Its pathway is carbohydrate metabolism; tricarboxylic acid cycle; isocitrate from oxaloacetate: step 1/2. In terms of biological role, peroxisomal citrate synthase involved in the citrate homeostasis. Catalyzes the condensation of acetyl coenzyme A and oxaloacetate to form citrate. Citrate synthase is the rate-limiting enzyme of the tricarboxylic acid (TCA) cycle. This chain is Citrate synthase, peroxisomal, found in Saccharomyces cerevisiae (strain ATCC 204508 / S288c) (Baker's yeast).